Consider the following 377-residue polypeptide: Apelin receptor (377 aa).

Topologically, residues 1 to 28 (MEDDGYNYYGADNQSECDYADWTPSGAL) are extracellular. Residue Asn-13 is glycosylated (N-linked (GlcNAc...) asparagine). 2 disulfides stabilise this stretch: Cys-17-Cys-279 and Cys-100-Cys-179. The chain crosses the membrane as a helical span at residues 29–52 (IPAIYILVFLLGTTGNGLVLWTVF). At 53 to 62 (WSSREKRRSA) the chain is on the cytoplasmic side. A helical transmembrane segment spans residues 63 to 84 (DIFIASLAVADLTFVVTLPLWA). Over 85–97 (TYTYREFDWPFGT) the chain is Extracellular. A helical membrane pass occupies residues 98 to 123 (FSCKLSSYLIFVNMYASVFCLTGLSF). Topologically, residues 124-144 (DRYLAIVRPVANARLRLRVSG) are cytoplasmic. Residues 145-162 (AVATAVLWVLAALLAVPV) form a helical membrane-spanning segment. The Extracellular portion of the chain corresponds to 163–196 (MVFRSTDIPENSTKTQCYMDYSMVATSNSEWAWE). N-linked (GlcNAc...) asparagine glycosylation is present at Asn-173. The chain crosses the membrane as a helical span at residues 197–221 (VGLGVSSTAVGFVVPFIIMLTCYFF). At 222 to 244 (IAQTIAGHFRKERIEGLRKRRRL) the chain is on the cytoplasmic side. Residues 245–268 (LSIIVVLVVTFALCWMPYHLVKTL) traverse the membrane as a helical segment. The Extracellular portion of the chain corresponds to 269-287 (YMLGNLLHWPCDFDSFLMN). The chain crosses the membrane as a helical span at residues 288–310 (VFPYCTCISYVNSCLNPFLYAFF). Residues 311–377 (DPRFRRACTS…IPYSQETLVD (67 aa)) are Cytoplasmic-facing. Residues 335–349 (SSSAEKSASYSSGHS) show a composition bias toward low complexity. A disordered region spans residues 335 to 377 (SSSAEKSASYSSGHSQGPGPNMCKGGEPMHEKSIPYSQETLVD).

The protein belongs to the G-protein coupled receptor 1 family. In terms of assembly, homodimer; dimerization inhibits APLNR-mediated G protein and beta-arrestin signaling pathways compared to monomeric APLNR. As to expression, widely expressed. Highest expression in the lung, lower in the heart, placenta, ovary, skeletal muscle, mammary gland, kidney and several structures in the brain as the hypothalamus (supraoptic and periventricular nuclei), pituitary, olfactory bulb and pineal gland.

Its subcellular location is the cell membrane. G protein-coupled receptor for peptide hormones apelin (APLN) and apelin receptor early endogenous ligand (APELA/ELA), that plays a role in the regulation of normal cardiovascular function and fluid homeostasis. When acting as apelin receptor, activates both G(i) protein pathway that inhibits adenylate cyclase activity, and the beta-arrestin pathway that promotes internalization of the receptor. APLNR/APJ also functions as mechanoreceptor that is activated by pathological stimuli in a G-protein-independent fashion to induce beta-arrestin signaling, hence eliciting cardiac hypertrophy. However, the presence of apelin ligand blunts cardiac hypertrophic induction from APLNR/APJ on response to pathological stimuli. Plays a key role in early development such as gastrulation, blood vessels formation and heart morphogenesis by acting as a APELA receptor. May promote angioblast migration toward the embryonic midline, i.e. the position of the future vessel formation, during vasculogenesis. Promotes sinus venosus (SV)-derived endothelial cells migration into the developing heart to promote coronary blood vessel development. Also plays a role in various processes in adults such as regulation of blood vessel formation, blood pressure, heart contractility and heart failure. This Rattus norvegicus (Rat) protein is Apelin receptor.